Here is a 273-residue protein sequence, read N- to C-terminus: MYRLAAFDMDGTLLMRDHRIGGATLNALHQLVDNGMILTFATGRHYLDMKGILSHSGINGYLITGNGTRVCDMDGMHLDGMDLPAELVEFVLRTPWQTNASIHIFRDDGWFTDYNDPALLAAHKTSSFQFQLTALDALPKTGNHKICFIAPHQELAELKIQLEQHMGDQADFCFSAVDCLEMLPRGCNKGAALERLSHHLDLTLADCMAFGDAMNDKEMLSRVGRGLVMGNALPQLKQELPQLQVIGRCEEQGVAHYLQHWLSSPHLTYSPEF.

The active-site Nucleophile is Asp-8. Positions 8, 10, and 212 each coordinate Mg(2+).

Belongs to the HAD-like hydrolase superfamily. Cof family. Requires Mg(2+) as cofactor.

It carries out the reaction 4-amino-2-methyl-5-(diphosphooxymethyl)pyrimidine + H2O = 4-amino-2-methyl-5-(phosphooxymethyl)pyrimidine + phosphate + H(+). Its function is as follows. Catalyzes the hydrolysis of 4-amino-2-methyl-5-hydroxymethylpyrimidine pyrophosphate (HMP-PP) to 4-amino-2-methyl-5-hydroxymethylpyrimidine phosphate (HMP-P). The chain is HMP-PP phosphatase from Yersinia enterocolitica serotype O:8 / biotype 1B (strain NCTC 13174 / 8081).